Consider the following 62-residue polypeptide: Photosystem II reaction center protein Z (62 aa).

2 consecutive transmembrane segments (helical) span residues 8–28 and 41–61; these read VLTA…VAYA and YVGS…NFLV.

Belongs to the PsbZ family. As to quaternary structure, PSII is composed of 1 copy each of membrane proteins PsbA, PsbB, PsbC, PsbD, PsbE, PsbF, PsbH, PsbI, PsbJ, PsbK, PsbL, PsbM, PsbT, PsbX, PsbY, PsbZ, Psb30/Ycf12, peripheral proteins PsbO, CyanoQ (PsbQ), PsbU, PsbV and a large number of cofactors. It forms dimeric complexes.

It is found in the cellular thylakoid membrane. In terms of biological role, may control the interaction of photosystem II (PSII) cores with the light-harvesting antenna, regulates electron flow through the 2 photosystem reaction centers. PSII is a light-driven water plastoquinone oxidoreductase, using light energy to abstract electrons from H(2)O, generating a proton gradient subsequently used for ATP formation. The protein is Photosystem II reaction center protein Z of Crocosphaera subtropica (strain ATCC 51142 / BH68) (Cyanothece sp. (strain ATCC 51142)).